The sequence spans 230 residues: Large ribosomal subunit protein uL1 (230 aa).

The protein belongs to the universal ribosomal protein uL1 family. Part of the 50S ribosomal subunit.

Binds directly to 23S rRNA. The L1 stalk is quite mobile in the ribosome, and is involved in E site tRNA release. Functionally, protein L1 is also a translational repressor protein, it controls the translation of the L11 operon by binding to its mRNA. The chain is Large ribosomal subunit protein uL1 from Rubrobacter xylanophilus (strain DSM 9941 / JCM 11954 / NBRC 16129 / PRD-1).